The sequence spans 248 residues: Ubiquinone/menaquinone biosynthesis C-methyltransferase UbiE (248 aa).

Residues Ser68 and Asp92 each contribute to the S-adenosyl-L-methionine site.

It belongs to the class I-like SAM-binding methyltransferase superfamily. MenG/UbiE family.

The enzyme catalyses a 2-demethylmenaquinol + S-adenosyl-L-methionine = a menaquinol + S-adenosyl-L-homocysteine + H(+). The catalysed reaction is a 2-methoxy-6-(all-trans-polyprenyl)benzene-1,4-diol + S-adenosyl-L-methionine = a 5-methoxy-2-methyl-3-(all-trans-polyprenyl)benzene-1,4-diol + S-adenosyl-L-homocysteine + H(+). It participates in quinol/quinone metabolism; menaquinone biosynthesis; menaquinol from 1,4-dihydroxy-2-naphthoate: step 2/2. It functions in the pathway cofactor biosynthesis; ubiquinone biosynthesis. Its function is as follows. Methyltransferase required for the conversion of demethylmenaquinol (DMKH2) to menaquinol (MKH2) and the conversion of 2-polyprenyl-6-methoxy-1,4-benzoquinol (DDMQH2) to 2-polyprenyl-3-methyl-6-methoxy-1,4-benzoquinol (DMQH2). The chain is Ubiquinone/menaquinone biosynthesis C-methyltransferase UbiE from Rickettsia peacockii (strain Rustic).